The primary structure comprises 492 residues: Catalase isozyme 1 (492 aa).

Residues histidine 65 and asparagine 138 contribute to the active site. Tyrosine 348 contributes to the heme binding site.

This sequence belongs to the catalase family. As to quaternary structure, homotetramer. The cofactor is heme.

The protein resides in the cytoplasm. The protein localises to the cytosol. Its subcellular location is the peroxisome matrix. It carries out the reaction 2 H2O2 = O2 + 2 H2O. Its activity is regulated as follows. Inhibited by salicylic acid. Its function is as follows. Catalyzes the degradation of hydrogen peroxide (H(2)O(2)) generated by peroxisomal oxidases to water and oxygen, thereby protecting cells from the toxic effects of hydrogen peroxide. The chain is Catalase isozyme 1 (CAT-1) from Nicotiana tabacum (Common tobacco).